The sequence spans 291 residues: RPE-retinal G protein-coupled receptor (291 aa).

Topologically, residues 1 to 15 (MAESGTLPTGFGELE) are extracellular. Residues 16 to 36 (VLAVGTVLLVEALSGLSLNIL) form a helical membrane-spanning segment. The Cytoplasmic segment spans residues 37-52 (TILSFCKTPELRTPSH). Residues 53 to 73 (LLVLSLALADSGISLNALVAA) traverse the membrane as a helical segment. Residues 74–91 (TSSLLRRWPYGSEGCQAH) lie on the Extracellular side of the membrane. An intrachain disulfide couples Cys-88 to Cys-162. The chain crosses the membrane as a helical span at residues 92–112 (GFQGFVTALASICSSAAVAWG). At 113–130 (RYHHFCTRSRLDWNTAVS) the chain is on the cytoplasmic side. A helical membrane pass occupies residues 131 to 151 (LVFFVWLSSAFWAALPLLGWG). Residues 152-175 (HYDYEPLGTCCTLDYSRGDRNFTS) lie on the Extracellular side of the membrane. An N-linked (GlcNAc...) asparagine glycan is attached at Asn-172. A helical membrane pass occupies residues 176–196 (FLFTMAFFNFLLPLFITVVSY). The Cytoplasmic segment spans residues 197–219 (RLMEQKLGKTSRPPVNTVLPART). Residues 220-240 (LLLGWGPYALLYLYATIADAT) traverse the membrane as a helical segment. At 241–247 (SISPKLQ) the chain is on the extracellular side. The chain crosses the membrane as a helical span at residues 248–268 (MVPALIAKAVPTVNAMNYALG). Residue Lys-255 is modified to N6-(retinylidene)lysine. At 269–291 (SEMVHRGIWQCLSPQRREHSREQ) the chain is on the cytoplasmic side.

The protein belongs to the G-protein coupled receptor 1 family. Opsin subfamily. Post-translationally, covalently binds all-trans- and 11-cis-retinal. As to expression, preferentially expressed at high levels in the retinal pigment epithelium (RPE) and Mueller cells of the neural retina.

It localises to the membrane. Its function is as follows. Receptor for all-trans- and 11-cis-retinal. Binds preferentially to the former and may catalyze the isomerization of the chromophore by a retinochrome-like mechanism. This chain is RPE-retinal G protein-coupled receptor (RGR), found in Bos taurus (Bovine).